The primary structure comprises 290 residues: MADSDAQETRPPAKDSPFSIKNLLNIEDKPTKPKNGLGSSKGVFESGFFSRLGDLSLPRFELPAQRIGLPAQYLERASAWWYPYALGTHFRTAGAEKVNQRETSPILDRHTPDPPKSDQESKEESADDEIALEESDAEEPKKETDQEDDWMRKGEDLESDKKPCRKKKTRTVFSRSQVFQLESTFDIKRYLSSSERAGLAASLHLTETQVKIWFQNRRNKWKRQLAAELEAANMSHAAAQRIVRVPILYHDSGAPEATGGPGTNSPGGQPLLSFPHHMYYSNAVPLLRPV.

Disordered regions lie at residues 1–41 (MADS…GSSK) and 96–169 (EKVN…KKKT). Positions 107–124 (LDRHTPDPPKSDQESKEE) are enriched in basic and acidic residues. Positions 125 to 137 (SADDEIALEESDA) are enriched in acidic residues. Residues 138–162 (EEPKKETDQEDDWMRKGEDLESDKK) are compositionally biased toward basic and acidic residues. Positions 166 to 225 (KKKTRTVFSRSQVFQLESTFDIKRYLSSSERAGLAASLHLTETQVKIWFQNRRNKWKRQL) form a DNA-binding region, homeobox.

This sequence belongs to the HMX homeobox family. As to expression, expressed in the ear placode and vesicle and in cells forming the vestibulo-acoustic ganglion.

The protein localises to the nucleus. Transcription factor involved in specification of neuronal cell types and which is required for inner ear and hypothalamus development. Binds to the 5'-CAAGTG-3' core sequence. This chain is Homeobox protein HMX3-B (hmx3b), found in Oryzias latipes (Japanese rice fish).